A 261-amino-acid polypeptide reads, in one-letter code: HTH-type transcriptional repressor CsqR (261 aa).

The 56-residue stretch at 8–63 (GNPRHDQLLMLIAERGYMNIDELANLLDVSTQTVRRDIRKLSEQGLITRHHGGAGR) folds into the HTH deoR-type domain. Positions 25-44 (MNIDELANLLDVSTQTVRRD) form a DNA-binding region, H-T-H motif.

Monomer in the absence of DNA. Exhibits a high level of cooperativity once it is bound to its target DNA.

Inactivated in the presence of the effectors sulfoquinovose and sulfoquinovosyl glycerol, leading to the de-repression of the target genes. Its function is as follows. Involved in the regulation of the sulfoquinovose operon. Represses the expression of the yihUTS operon and of the yihV and csqR genes. Binds DNA inside the spacer between the bidirectional transcription units comprising the yihUTS operon and the yihV gene, and upstream the csqR gene itself. This is HTH-type transcriptional repressor CsqR from Escherichia coli (strain K12).